The sequence spans 243 residues: Type III pantothenate kinase (243 aa).

Residue 6–13 (DIGNTVAK) coordinates ATP. Substrate-binding positions include Y86 and 93 to 96 (GYDR). The Proton acceptor role is filled by D95. A K(+)-binding site is contributed by D116. T119 provides a ligand contact to ATP. Residue T171 participates in substrate binding.

The protein belongs to the type III pantothenate kinase family. As to quaternary structure, homodimer. It depends on NH4(+) as a cofactor. Requires K(+) as cofactor.

It is found in the cytoplasm. It carries out the reaction (R)-pantothenate + ATP = (R)-4'-phosphopantothenate + ADP + H(+). It functions in the pathway cofactor biosynthesis; coenzyme A biosynthesis; CoA from (R)-pantothenate: step 1/5. Catalyzes the phosphorylation of pantothenate (Pan), the first step in CoA biosynthesis. This is Type III pantothenate kinase from Bacteroides fragilis (strain YCH46).